A 434-amino-acid polypeptide reads, in one-letter code: MSAPLETVMSPCQRLDARTGAAAPPKSLAFSIERIMAKTSEPRAGVFEANQGLESGAKKTLNVCPPVPCMIPIQSLAYDVSPKALLNYSELWRSSIRGSLCGPSALCKSNCGICCKNDFNLSQSLAPSGRVIKPQVINQTLGMPSSGSFYYFNYLESSFHPPDLLNGQLLSSSLINAQSQATLSAHHKLFLLDNSKLSALAADKFPNPQFPHKERLPGQLDQVMKENSALTDRTGKIHTKLSANSGEGKPKIFTCEVCGKVFNAHYNLTRHMPVHTGARPFVCKVCGKGFRQASTLCRHKIIHTQEKPHKCNQCGKAFNRSSTLNTHIRIHAGYKPFVCEFCGKGFHQKGNYKNHKLTHSGEKQYKCSICNKAFHQVYNLTFHMHTHNDKKPFTCATCGKGFCRNFDLKKHVRKLHDNVSSSCSHKEISRTGQS.

The Engrailed homology 1 repressor motif lies at 27-42; the sequence is SLAFSIERIMAKTSEP. C2H2-type zinc fingers lie at residues 253 to 275, 281 to 303, 309 to 331, 337 to 359, 365 to 387, and 393 to 416; these read FTCE…MPVH, FVCK…KIIH, HKCN…IRIH, FVCE…KLTH, YKCS…MHTH, and FTCA…RKLH.

It belongs to the krueppel C2H2-type zinc-finger protein family.

It localises to the nucleus. Functionally, transcription repressor. Component of the regulatory cascade that controls the development of dopaminergic (DA) and serotonergic (5HT) neurons. This Xenopus laevis (African clawed frog) protein is Fez family zinc finger protein 2 (fezf2).